A 490-amino-acid polypeptide reads, in one-letter code: MDLVMLLVLTLTCLILLSIWRQSSGRGKLPPGPIPLPIIGNIFQLNVKNITQSLTSFSKVYGPVFTLYFGTKPTVILHGYEAVKEALIDHGEEFAERGSFPVAEKINKDLGIVFSHGNRWKEIRRFTLTTLRNLGMGKRNIEDRVQEEARCLVEELRKTNGSPCDPTFILGCAPCNVICSIIFQNRFDYKDQDFLNLMEKLNENMKILSSPWTQFCSFFPVLIDYCPGSHTTLAKNVYHIRNYLLKKIKEHQESLDVTNPRDFIDYYLIKWKQENHNPHSEFTLENLSITVTDLFGAGTETTSTTLRYALLLLLKCPEVTAKVQEEIDRVVGKHRSPCMQDRSRMPYTDAHDHEVQRFIDLIPTNLPHAVTCDIKFRNYLIPKGTTIITSLSSVLHDSKEFPDPEIFDPGHFLDGNGKFKKSDYFMPFSAGKRMCAGEGLARMELFLFLTTILQNFKLKSVLHPKDIDTTPVFNGFASLPPFYELCFIPL.

2 positions are modified to N6-acetyllysine: Lys-249 and Lys-375. Residue Cys-435 coordinates heme.

Belongs to the cytochrome P450 family. Heme is required as a cofactor.

It is found in the endoplasmic reticulum membrane. The protein resides in the microsome membrane. The enzyme catalyses an organic molecule + reduced [NADPH--hemoprotein reductase] + O2 = an alcohol + oxidized [NADPH--hemoprotein reductase] + H2O + H(+). Cytochromes P450 are a group of heme-thiolate monooxygenases. In liver microsomes, this enzyme is involved in an NADPH-dependent electron transport pathway. It oxidizes a variety of structurally unrelated compounds, including steroids, fatty acids, and xenobiotics. The protein is Cytochrome P450 2C6 (Cyp2c6) of Rattus norvegicus (Rat).